The primary structure comprises 343 residues: Putative kinase HI_0665 (343 aa).

Aspartate 209 functions as the Proton acceptor in the catalytic mechanism.

This sequence belongs to the HipA Ser/Thr kinase family.

The chain is Putative kinase HI_0665 from Haemophilus influenzae (strain ATCC 51907 / DSM 11121 / KW20 / Rd).